An 857-amino-acid chain; its full sequence is MAAAPSGKTWIDVQKKTFTGWANNYLKERILKIEDLATSLEDGVLLINLLEIISSKKILKYNKAPKIRMQKIENNNMAVNFIKSEGLKLVGIGAEDIVDSQLKLILGLIWTLILRYQIQMSESDNSPKAALLEWVRKQVAPYKVVVNNFTDSWCDGRVLSALTDSLKPGVREMSTLTGDAVQDIDRSMDIALEEYEIPKIMDANDMNSLPDELSVITYVSYFRDYALNKEKRDADALAALEKKRRETSDASKVEVYGPGVEGGFVNKSADFHIKAVNYYGEPLANGGEGFTVSVVGADGVEVPCKLVDNKNGIYDASYTATVPQDYTVVVQLDDVHCKDSPYNVKIDGSDAQHSNAYGPGLEGGKVGVPAAFKIQGRNKDGETVTQGGDDFTVKVQSPEGPVDAQIKDNGDGSYDVEYKPTKGGDHTVEVFLRGEPLAQGPTEVKILNSDSQNSYCDGPGFEKAQAKRPTEFTIHSVGADNKPCAAGGDPFQVSISGPHPVNVGITDNDDGTYTVAYTPEQPGDYEIQVTLNDEAIKDIPKSIHIKPAADPEKSYAEGPGLDGGECFQPSKFKIHAVDPDGVHRTDGGDGFVVTIEGPAPVDPVMVDNGDGTYDVEFEPKEAGDYVINLTLDGDNVNGFPKTVTVKPAPSAEHSYAEGEGLVKVFDNAPAEFTIFAVDTKGVARTDGGDPFEVAINGPDGLVVDAKVTDNNDGTYGVVYDAPVEGNYNVNVTLRGNPIKNMPIDVKCIEGANGEDSSFGSFTFTVAAKNKKGEVKTYGGDKFEVSITGPAEEITLDAIDNQDGTYTAAYSLVGNGRFSTGVKLNGKHIEGSPFKQVLGNPGKKNPEVKSFTTTRTAN.

Met-1 carries the post-translational modification Blocked amino end (Met). The interval 1 to 250 (MAAAPSGKTW…EKKRRETSDA (250 aa)) is actin-binding. 2 Calponin-homology (CH) domains span residues 12-117 (DVQK…LRYQ) and 125-227 (NSPK…DYAL). Positions 229-246 (KEKRDADALAALEKKRRE) are regulatory site. 6 Filamin repeats span residues 245 to 346 (RETS…NVKI), 347 to 446 (DGSD…EVKI), 447 to 545 (LNSD…SIHI), 546 to 645 (KPAA…TVTV), 646 to 747 (KPAP…DVKC), and 763 to 837 (FTVA…KQVL). The disordered stretch occupies residues 832–857 (PFKQVLGNPGKKNPEVKSFTTTRTAN).

As to quaternary structure, homodimer.

In terms of biological role, F-actin cross-linking protein. The chain is Gelation factor (abpC) from Dictyostelium discoideum (Social amoeba).